The sequence spans 252 residues: Indole-3-glycerol phosphate synthase (252 aa).

The protein belongs to the TrpC family.

It carries out the reaction 1-(2-carboxyphenylamino)-1-deoxy-D-ribulose 5-phosphate + H(+) = (1S,2R)-1-C-(indol-3-yl)glycerol 3-phosphate + CO2 + H2O. Its pathway is amino-acid biosynthesis; L-tryptophan biosynthesis; L-tryptophan from chorismate: step 4/5. The sequence is that of Indole-3-glycerol phosphate synthase from Listeria welshimeri serovar 6b (strain ATCC 35897 / DSM 20650 / CCUG 15529 / CIP 8149 / NCTC 11857 / SLCC 5334 / V8).